We begin with the raw amino-acid sequence, 133 residues long: Aspartate 1-decarboxylase (133 aa).

Ser-26 serves as the catalytic Schiff-base intermediate with substrate; via pyruvic acid. Ser-26 carries the pyruvic acid (Ser) modification. Position 58 (Thr-58) interacts with substrate. Tyr-59 serves as the catalytic Proton donor. A substrate-binding site is contributed by Gly-74–Ala-76.

This sequence belongs to the PanD family. As to quaternary structure, heterooctamer of four alpha and four beta subunits. The cofactor is pyruvate. Post-translationally, is synthesized initially as an inactive proenzyme, which is activated by self-cleavage at a specific serine bond to produce a beta-subunit with a hydroxyl group at its C-terminus and an alpha-subunit with a pyruvoyl group at its N-terminus.

Its subcellular location is the cytoplasm. It carries out the reaction L-aspartate + H(+) = beta-alanine + CO2. It functions in the pathway cofactor biosynthesis; (R)-pantothenate biosynthesis; beta-alanine from L-aspartate: step 1/1. Its function is as follows. Catalyzes the pyruvoyl-dependent decarboxylation of aspartate to produce beta-alanine. The polypeptide is Aspartate 1-decarboxylase (Legionella pneumophila (strain Lens)).